The chain runs to 94 residues: MASEKKDKLEPQIKSVDMSEDMQQEAVEVAIEAMEKYHIEKDIAQYIKREFDSRKGATWHCVVGRNFGSFVTHETKHFIYFYLGHCAILLFKTQ.

It belongs to the dynein light chain family. As to quaternary structure, homodimer. Cytoplasmic dynein consists of two catalytic heavy chains (HCs) and a number of non-catalytic subunits which present intermediate chains (ICs), light intermediate chains (LICs) and light chains (LCs). Component of the nuclear pore complex (NPC). The nuclear pore complex constitutes the exclusive means of nucleocytoplasmic transport. NPCs allow the passive diffusion of ions and small molecules and the active, nuclear transport receptor-mediated bidirectional transport of macromolecules such as proteins, RNAs, ribonucleoparticles (RNPs), and ribosomal subunits across the nuclear envelope. Due to its 8-fold rotational symmetry, all subunits are present with 8 copies or multiples thereof.

It is found in the cytoplasm. The protein resides in the cytoskeleton. It localises to the nucleus. Its subcellular location is the nuclear pore complex. In terms of biological role, acts as one of several non-catalytic accessory components of the cytoplasmic dynein complex that are thought to be involved in linking dynein to cargos and to adapter proteins that regulate dynein function. Cytoplasmic dynein 1 acts as a motor for the intracellular retrograde motility of vesicles and organelles along microtubules. May play a role in changing or maintaining the spatial distribution of cytoskeletal structures. Also a component of the nuclear pore complex. This Emericella nidulans (strain FGSC A4 / ATCC 38163 / CBS 112.46 / NRRL 194 / M139) (Aspergillus nidulans) protein is Dynein light chain, cytoplasmic (nudG).